The following is a 229-amino-acid chain: UPF0319 protein Sbal223_2728 (229 aa).

The signal sequence occupies residues 1-21; it reads MKSLLPISSLLVLLGSASAFA.

This sequence belongs to the UPF0319 family.

This is UPF0319 protein Sbal223_2728 from Shewanella baltica (strain OS223).